The sequence spans 327 residues: Undecaprenyl-phosphate 4-deoxy-4-formamido-L-arabinose transferase (327 aa).

The next 2 membrane-spanning stretches (helical) occupy residues 235–255 (LLSL…VLLV) and 270–290 (VFTL…GMGL).

This sequence belongs to the glycosyltransferase 2 family.

The protein resides in the cell inner membrane. It carries out the reaction UDP-4-deoxy-4-formamido-beta-L-arabinose + di-trans,octa-cis-undecaprenyl phosphate = 4-deoxy-4-formamido-alpha-L-arabinopyranosyl di-trans,octa-cis-undecaprenyl phosphate + UDP. It participates in glycolipid biosynthesis; 4-amino-4-deoxy-alpha-L-arabinose undecaprenyl phosphate biosynthesis; 4-amino-4-deoxy-alpha-L-arabinose undecaprenyl phosphate from UDP-4-deoxy-4-formamido-beta-L-arabinose and undecaprenyl phosphate: step 1/2. It functions in the pathway bacterial outer membrane biogenesis; lipopolysaccharide biosynthesis. Functionally, catalyzes the transfer of 4-deoxy-4-formamido-L-arabinose from UDP to undecaprenyl phosphate. The modified arabinose is attached to lipid A and is required for resistance to polymyxin and cationic antimicrobial peptides. This is Undecaprenyl-phosphate 4-deoxy-4-formamido-L-arabinose transferase from Yersinia pestis bv. Antiqua (strain Antiqua).